Consider the following 117-residue polypeptide: Large ribosomal subunit protein uL18 (117 aa).

It belongs to the universal ribosomal protein uL18 family. As to quaternary structure, part of the 50S ribosomal subunit; part of the 5S rRNA/L5/L18/L25 subcomplex. Contacts the 5S and 23S rRNAs.

Its function is as follows. This is one of the proteins that bind and probably mediate the attachment of the 5S RNA into the large ribosomal subunit, where it forms part of the central protuberance. The sequence is that of Large ribosomal subunit protein uL18 from Chromobacterium violaceum (strain ATCC 12472 / DSM 30191 / JCM 1249 / CCUG 213 / NBRC 12614 / NCIMB 9131 / NCTC 9757 / MK).